A 200-amino-acid chain; its full sequence is Small ribosomal subunit protein mS38 (200 aa).

This sequence belongs to the mitochondrion-specific ribosomal protein mS38 family. In terms of assembly, component of the mitochondrial ribosome small subunit (28S) which comprises a 12S rRNA and about 30 distinct proteins. Interacts with Aurora-A. Ubiquitously expressed and especially highly expressed in heart, skeletal muscle and testis.

The protein resides in the mitochondrion matrix. It is found in the nucleus. May act as a negative regulator of Aurora-A kinase, by down-regulation through proteasome-dependent degradation. The chain is Small ribosomal subunit protein mS38 (Aurkaip1) from Mus musculus (Mouse).